A 1732-amino-acid chain; its full sequence is MSGEVRLRQLEQFILDGPAQTNGQCFSVETLLDILICLYDECNNSPLRREKNILEYLEWAKPFTSKVKQMRLHREDFEILKVIGRGAFGEVAVVKLKNADKVFAMKILNKWEMLKRAETACFREERDVLVNGDNKWITTLHYAFQDDNNLYLVMDYYVGGDLLTLLSKFEDRLPEDMARFYLAEMVIAIDSVHQLHYVHRDIKPDNILMDMNGHIRLADFGSCLKLMEDGTVQSSVAVGTPDYISPEILQAMEDGKGRYGPECDWWSLGVCMYEMLYGETPFYAESLVETYGKIMNHKERFQFPAQVTDVSENAKDLIRRLICSREHRLGQNGIEDFKKHPFFSGIDWDNIRNCEAPYIPEVSSPTDTSNFDVDDDCLKNSETMPPPTHTAFSGHHLPFVGFTYTSSCVLSDRSCLRVTAGPTSLDLDVNVQRTLDNNLATEAYERRIKRLEQEKLELSRKLQESTQTVQALQYSTVDGPLTASKDLEIKNLKEEIEKLRKQVTESSHLEQQLEEANAVRQELDDAFRQIKAYEKQIKTLQQEREDLNKELVQASERLKNQSKELKDAHCQRKLAMQEFMEINERLTELHTQKQKLARHVRDKEEEVDLVMQKVESLRQELRRTERAKKELEVHTEALAAEASKDRKLREQSEHYSKQLENELEGLKQKQISYSPGVCSIEHQQEITKLKTDLEKKSIFYEEELSKREGIHANEIKNLKKELHDSEGQQLALNKEIMILKDKLEKTRRESQSEREEFESEFKQQYEREKVLLTEENKKLTSELDKLTTLYENLSIHNQQLEEEVKDLADKKESVAHWEAQITEIIQWVSDEKDARGYLQALASKMTEELEALRNSSLGTRATDMPWKMRRFAKLDMSARLELQSALDAEIRAKQAIQEELNKVKASNIITECKLKDSEKKNLELLSEIEQLIKDTEELRSEKGIEHQDSQHSFLAFLNTPTDALDQFERSPSCTPASKGRRTVDSTPLSVHTPTLRKKGCPGSTGFPPKRKTHQFFVKSFTTPTKCHQCTSLMVGLIRQGCSCEVCGFSCHITCVNKAPTTCPVPPEQTKGPLGIDPQKGIGTAYEGHVRIPKPAGVKKGWQRALAIVCDFKLFLYDIAEGKASQPSVVISQVIDMRDEEFSVSSVLASDVIHASRKDIPCIFRVTASQLSASNNKCSILMLADTENEKNKWVGVLSELHKILKKNKFRDRSVYVPKEAYDSTLPLIKTTQAAAIIDHERIALGNEEGLFVVHVTKDEIIRVGDNKKIHQIELIPNDQLVAVISGRNRHVRLFPMSALDGRETDFYKLSETKGCQTVTSGKVRHGALTCLCVAMKRQVLCYELFQSKTRHRKFKEIQVPYNVQWMAIFSEQLCVGFQSGFLRYPLNGEGNPYSMLHSNDHTLSFIAHQPMDAICAVEISSKEYLLCFNSIGIYTDCQGRRSRQQELMWPANPSSCCYNAPYLSVYSENAVDIFDVNSMEWIQTLPLKKVRPLNNEGSLNLLGLETIRLIYFKNKMAEGDELVVPETSDNSRKQMVRNINNKRRYSFRVPEEERMQQRREMLRDPEMRNKLISNPTNFNHIAHMGPGDGIQILKDLPMNPRPQESRTVFSGSVSIPSITKSRPEPGRSMSASSGLSARSSAQNGSALKREFSGGSYSAKRQPMPSPSEGSLSSGGMDQGSDAPARDFDGEDSDSPRHSTASNSSNLSSPPSPASPRKTKSLSLESTDRGSWDP.

The 267-residue stretch at 77–343 folds into the Protein kinase domain; the sequence is FEILKVIGRG…IEDFKKHPFF (267 aa). Residues 83 to 91 and Lys106 contribute to the ATP site; that span reads IGRGAFGEV. The Proton acceptor role is filled by Asp201. Phosphoserine; by autocatalysis occurs at positions 222 and 234. Residue Thr240 is modified to Phosphothreonine; by autocatalysis. Residues 344 to 414 form the AGC-kinase C-terminal domain; sequence SGIDWDNIRN…TSSCVLSDRS (71 aa). 2 coiled-coil regions span residues 437–820 and 880–943; these read NNLA…WEAQ and LELQ…SEKG. Residues 968 to 1003 are disordered; the sequence is ERSPSCTPASKGRRTVDSTPLSVHTPTLRKKGCPGS. The Phorbol-ester/DAG-type zinc-finger motif lies at 1012-1062; it reads THQFFVKSFTTPTKCHQCTSLMVGLIRQGCSCEVCGFSCHITCVNKAPTTC. The 120-residue stretch at 1082–1201 folds into the PH domain; it reads GTAYEGHVRI…WVGVLSELHK (120 aa). A Phosphoserine modification is found at Ser1127. The CNH domain maps to 1227–1499; sequence IKTTQAAAII…RPLNNEGSLN (273 aa). Position 1545 is a phosphoserine (Ser1545). The region spanning 1571–1584 is the CRIB domain; the sequence is ISNPTNFNHIAHMG. The tract at residues 1591–1732 is disordered; the sequence is ILKDLPMNPR…ESTDRGSWDP (142 aa). Residues 1604–1619 are compositionally biased toward polar residues; sequence SRTVFSGSVSIPSITK. Ser1611, Ser1613, Ser1629, Ser1651, Ser1664, Ser1669, and Ser1693 each carry phosphoserine. Positions 1625–1640 are enriched in low complexity; that stretch reads GRSMSASSGLSARSSA. Residues 1665–1674 show a composition bias toward low complexity; that stretch reads PSEGSLSSGG. Positions 1697-1707 are enriched in low complexity; the sequence is STASNSSNLSS. Ser1719 and Ser1721 each carry phosphoserine.

The protein belongs to the protein kinase superfamily. AGC Ser/Thr protein kinase family. DMPK subfamily. As to quaternary structure, homodimer and homotetramer via the coiled coil regions. Interacts tightly with GTP-bound but not GDP-bound CDC42. Forms a tripartite complex with MYO18A and LURAP1 with the latter acting as an adapter connecting CDC42BPA and MYO18A. LURAP1 binding results in activation of CDC42BPA by abolition of its negative autoregulation. Interacts with LURAP1. Interacts (via AGC-kinase C-terminal domain) with FAM89B/LRAP25 (via LRR repeat). Forms a tripartite complex with FAM89B/LRAP25 and LIMK1. Mg(2+) serves as cofactor. In terms of processing, proteolytically cleaved by caspases upon apoptosis induction. The cleavage at Asp-478 by CASP3 increases its kinase activity (in vitro). In terms of tissue distribution, abundant in the heart, brain, skeletal muscle, kidney, and pancreas, with little or no expression in the lung and liver.

Its subcellular location is the cytoplasm. It is found in the cell projection. The protein localises to the lamellipodium. The enzyme catalyses L-seryl-[protein] + ATP = O-phospho-L-seryl-[protein] + ADP + H(+). The catalysed reaction is L-threonyl-[protein] + ATP = O-phospho-L-threonyl-[protein] + ADP + H(+). Its activity is regulated as follows. Maintained in an inactive, closed conformation by an interaction between the kinase domain and the negative autoregulatory C-terminal coiled-coil region. Agonist binding to the phorbol ester binding site disrupts this, releasing the kinase domain to allow N-terminus-mediated dimerization and kinase activation by transautophosphorylation. Inhibited by chelerythrine chloride. Its function is as follows. Serine/threonine-protein kinase which is an important downstream effector of CDC42 and plays a role in the regulation of cytoskeleton reorganization and cell migration. Regulates actin cytoskeletal reorganization via phosphorylation of PPP1R12C and MYL9/MLC2. In concert with MYO18A and LURAP1, is involved in modulating lamellar actomyosin retrograde flow that is crucial to cell protrusion and migration. Phosphorylates: PPP1R12A, LIMK1 and LIMK2. May play a role in TFRC-mediated iron uptake. In concert with FAM89B/LRAP25 mediates the targeting of LIMK1 to the lamellipodium resulting in its activation and subsequent phosphorylation of CFL1 which is important for lamellipodial F-actin regulation. Triggers the formation of an extrusion apical actin ring required for epithelial extrusion of apoptotic cells. In Homo sapiens (Human), this protein is Serine/threonine-protein kinase MRCK alpha.